A 139-amino-acid polypeptide reads, in one-letter code: Large ribosomal subunit protein uL16 (139 aa).

Residues 1–21 (MLSPRKTKFRKQHRGRMRGKA) are compositionally biased toward basic residues. The tract at residues 1–23 (MLSPRKTKFRKQHRGRMRGKATR) is disordered.

It belongs to the universal ribosomal protein uL16 family. In terms of assembly, part of the 50S ribosomal subunit.

In terms of biological role, binds 23S rRNA and is also seen to make contacts with the A and possibly P site tRNAs. This chain is Large ribosomal subunit protein uL16, found in Acaryochloris marina (strain MBIC 11017).